Here is a 513-residue protein sequence, read N- to C-terminus: ATP synthase subunit alpha (513 aa).

169–176 (GDRQIGKS) is an ATP binding site.

It belongs to the ATPase alpha/beta chains family. F-type ATPases have 2 components, CF(1) - the catalytic core - and CF(0) - the membrane proton channel. CF(1) has five subunits: alpha(3), beta(3), gamma(1), delta(1), epsilon(1). CF(0) has three main subunits: a(1), b(2) and c(9-12). The alpha and beta chains form an alternating ring which encloses part of the gamma chain. CF(1) is attached to CF(0) by a central stalk formed by the gamma and epsilon chains, while a peripheral stalk is formed by the delta and b chains.

The protein localises to the cell inner membrane. It catalyses the reaction ATP + H2O + 4 H(+)(in) = ADP + phosphate + 5 H(+)(out). Produces ATP from ADP in the presence of a proton gradient across the membrane. The alpha chain is a regulatory subunit. The chain is ATP synthase subunit alpha from Colwellia psychrerythraea (strain 34H / ATCC BAA-681) (Vibrio psychroerythus).